Reading from the N-terminus, the 625-residue chain is Vacuolar-sorting receptor 2 (625 aa).

The first 19 residues, 1-19 (MRTTNVWLVVIVWVTVGWS), serve as a signal peptide directing secretion. The Lumenal segment spans residues 20-567 (SCTGRFVVEK…INRDARGDFS (548 aa)). The 113-residue stretch at 55-167 (QYGGSMSGAV…SLGSAIKTAI (113 aa)) folds into the PA domain. N147, N293, and N433 each carry an N-linked (GlcNAc...) asparagine glycan. EGF-like domains follow at residues 415–465 (ETNE…THCE) and 468–515 (GALR…KECK). 7 cysteine pairs are disulfide-bonded: C419/C437, C426/C446, C448/C464, C472/C492, C479/C500, C502/C514, and C544/C557. One can recognise an EGF-like 3; calcium-binding domain in the interval 516–558 (DVNECEEKTACQCRDCKCKNTWGSYECSCSGSLLYIREHDICI). The helical transmembrane segment at 568-588 (WGVIWIIIMGLGAAALGAYTV) threads the bilayer. Over 589-625 (YKYRIRTYMDSEIRAIMAQYMPLDNNPNTQLSSQLEL) the chain is Cytoplasmic. Positions 608-611 (YMPL) match the Tyrosine-based internalization motif motif.

This sequence belongs to the VSR (BP-80) family. As to expression, expressed only in flowers.

Its subcellular location is the membrane. The protein resides in the golgi apparatus membrane. It localises to the cytoplasmic vesicle. It is found in the clathrin-coated vesicle membrane. The protein localises to the prevacuolar compartment membrane. In terms of biological role, vacuolar-sorting receptor (VSR) involved in clathrin-coated vesicles sorting from Golgi apparatus to vacuoles. The chain is Vacuolar-sorting receptor 2 from Arabidopsis thaliana (Mouse-ear cress).